We begin with the raw amino-acid sequence, 205 residues long: Probable GTP-binding protein EngB (205 aa).

An EngB-type G domain is found at 27-201 (TGIEIAFAGR…AAKLDFWFSP (175 aa)). GTP is bound by residues 35–42 (GRSNAGKS), 62–66 (GRTQL), 80–83 (DLPG), 147–150 (TKAD), and 180–182 (FSA). Mg(2+) is bound by residues Ser-42 and Thr-64.

Belongs to the TRAFAC class TrmE-Era-EngA-EngB-Septin-like GTPase superfamily. EngB GTPase family. It depends on Mg(2+) as a cofactor.

Its function is as follows. Necessary for normal cell division and for the maintenance of normal septation. This Haemophilus influenzae (strain PittEE) protein is Probable GTP-binding protein EngB.